Reading from the N-terminus, the 403-residue chain is Metacaspase-7 (403 aa).

Residues histidine 86 and cysteine 139 contribute to the active site. S-nitrosocysteine is present on cysteine 139.

Belongs to the peptidase C14B family. In terms of processing, proteolytically processed; by an autocatalytic mechanism. In terms of tissue distribution, expressed in roots, flowers and siliques.

The sequence is that of Metacaspase-7 (AMC7) from Arabidopsis thaliana (Mouse-ear cress).